The primary structure comprises 92 residues: Small ribosomal subunit protein bS20 (92 aa).

A disordered region spans residues 1–23 (MANTPSAKKRAKQAEKRRSHNAS). A compositionally biased stretch (basic residues) spans 7-20 (AKKRAKQAEKRRSH).

The protein belongs to the bacterial ribosomal protein bS20 family.

Its function is as follows. Binds directly to 16S ribosomal RNA. This is Small ribosomal subunit protein bS20 from Pseudomonas fluorescens (strain SBW25).